A 259-amino-acid chain; its full sequence is Phosphatidylglycerol--prolipoprotein diacylglyceryl transferase (259 aa).

Helical transmembrane passes span 12–32 (LAIHWYALCILSGLVLAVYLA), 41–61 (ISSDAIFDFILIAFPLAIVGA), 80–100 (IIAIWNGGIAIYGGLITGALV), and 109–129 (VLNPIHFLDIAAPSVMAAQAI). Arg-131 is an a 1,2-diacyl-sn-glycero-3-phospho-(1'-sn-glycerol) binding site. 3 consecutive transmembrane segments (helical) span residues 167 to 187 (IPTFLYESFWNLLGFVIIMMW), 194 to 214 (LLDGEIFAFYLIWYGSGRLVI), and 226 to 246 (GIRISQYVSALLIIIGLIFVI).

The protein belongs to the Lgt family.

The protein resides in the cell membrane. It catalyses the reaction L-cysteinyl-[prolipoprotein] + a 1,2-diacyl-sn-glycero-3-phospho-(1'-sn-glycerol) = an S-1,2-diacyl-sn-glyceryl-L-cysteinyl-[prolipoprotein] + sn-glycerol 1-phosphate + H(+). It functions in the pathway protein modification; lipoprotein biosynthesis (diacylglyceryl transfer). Catalyzes the transfer of the diacylglyceryl group from phosphatidylglycerol to the sulfhydryl group of the N-terminal cysteine of a prolipoprotein, the first step in the formation of mature lipoproteins. In Streptococcus pyogenes serotype M3 (strain ATCC BAA-595 / MGAS315), this protein is Phosphatidylglycerol--prolipoprotein diacylglyceryl transferase.